Reading from the N-terminus, the 278-residue chain is Coiled-coil domain-containing protein 106 (278 aa).

A coiled-coil region spans residues 61–99; sequence AQLHLALERNSWLQKRIEDLEEERDFLRCQLDKFISSAR. Positions 102–119 are enriched in basic and acidic residues; that stretch reads ADDHCRGKPGPRRAEGDG. The interval 102 to 174 is disordered; it reads ADDHCRGKPG…KPKARERQRV (73 aa). Serine 128 is modified (phosphoserine). Residues 131-144 show a composition bias toward low complexity; that stretch reads ESAASSLSGASEEG. Over residues 150-166 the composition is skewed to basic residues; sequence KRQKQKGGPGRRRFGKP. The Bipartite nuclear localization signal signature appears at 151 to 164; that stretch reads RQKQKGGPGRRRFG.

Interacts with p53/TP53.

The protein resides in the nucleus. Its function is as follows. Promotes the degradation of p53/TP53 protein and inhibits its transactivity. This chain is Coiled-coil domain-containing protein 106 (CCDC106), found in Bos taurus (Bovine).